Here is a 313-residue protein sequence, read N- to C-terminus: Small ribosomal subunit protein uS2 (313 aa).

Over residues 233–256 the composition is skewed to basic and acidic residues; sequence RTMTDKQSDVAKEAKADGKEEAPK. The segment at 233–293 is disordered; the sequence is RTMTDKQSDV…SRKLVAAGTA (61 aa).

This sequence belongs to the universal ribosomal protein uS2 family.

The chain is Small ribosomal subunit protein uS2 from Bdellovibrio bacteriovorus (strain ATCC 15356 / DSM 50701 / NCIMB 9529 / HD100).